Here is a 248-residue protein sequence, read N- to C-terminus: Protein FAM133A (248 aa).

Residues 68–80 (NWKKELEKSREKL) are compositionally biased toward basic and acidic residues. Residues 68-248 (NWKKELEKSR…KKSGSSHKSR (181 aa)) are disordered. A compositionally biased stretch (basic residues) spans 90–102 (KRERKKKRKKKSC). The segment covering 103 to 118 (RSSSSSSSSDSSSSSS) has biased composition (low complexity). A compositionally biased stretch (basic residues) spans 127 to 138 (QGKRRKKKKNRS). 3 stretches are compositionally biased toward basic and acidic residues: residues 147–156 (HESESESKES), 163–175 (SKDE…DVRS), and 211–220 (RCEEREQAKE). A compositionally biased stretch (basic residues) spans 221-248 (KVKKKKKKQHKKHSKKKKKKSGSSHKSR).

It belongs to the FAM133 family.

This is Protein FAM133A (FAM133A) from Homo sapiens (Human).